The chain runs to 252 residues: tRNA (guanine-N(7)-)-methyltransferase (252 aa).

S-adenosyl-L-methionine is bound by residues E51, D76, N103, and D125. D125 is an active-site residue. Residues K129, D159, and 199-202 (TYYE) contribute to the substrate site.

The protein belongs to the class I-like SAM-binding methyltransferase superfamily. TrmB family.

It carries out the reaction guanosine(46) in tRNA + S-adenosyl-L-methionine = N(7)-methylguanosine(46) in tRNA + S-adenosyl-L-homocysteine. It functions in the pathway tRNA modification; N(7)-methylguanine-tRNA biosynthesis. Functionally, catalyzes the formation of N(7)-methylguanine at position 46 (m7G46) in tRNA. The polypeptide is tRNA (guanine-N(7)-)-methyltransferase (Bacteroides fragilis (strain YCH46)).